A 197-amino-acid polypeptide reads, in one-letter code: TATA-box-binding protein (197 aa).

2 tandem repeats follow at residues 10–86 (IENI…VKLL) and 101–177 (IQNI…YNQL).

It belongs to the TBP family.

In terms of biological role, general factor that plays a role in the activation of archaeal genes transcribed by RNA polymerase. Binds specifically to the TATA box promoter element which lies close to the position of transcription initiation. This chain is TATA-box-binding protein, found in Pyrobaculum neutrophilum (strain DSM 2338 / JCM 9278 / NBRC 100436 / V24Sta) (Thermoproteus neutrophilus).